The primary structure comprises 130 residues: WAP four-disulfide core domain protein 3 (130 aa).

The first 16 residues, 1-16, serve as a signal peptide directing secretion; it reads MKALLALGFLASWVAA. WAP domains lie at 17–61 and 62–106; these read GEHA…RGDI and EGGR…IPGL. 8 disulfides stabilise this stretch: Cys-25–Cys-49, Cys-32–Cys-53, Cys-36–Cys-48, Cys-42–Cys-57, Cys-69–Cys-94, Cys-77–Cys-98, Cys-81–Cys-93, and Cys-87–Cys-102. Asn-116 is a glycosylation site (N-linked (GlcNAc...) asparagine).

It localises to the secreted. The chain is WAP four-disulfide core domain protein 3 (Wfdc3) from Mus musculus (Mouse).